Reading from the N-terminus, the 136-residue chain is Protein NrdI (136 aa).

The protein belongs to the NrdI family.

Functionally, probably involved in ribonucleotide reductase function. This is Protein NrdI from Salmonella paratyphi B (strain ATCC BAA-1250 / SPB7).